An 802-amino-acid polypeptide reads, in one-letter code: Oleate activated transcription factor 3 (802 aa).

Residues Cys-19 to Cys-47 constitute a DNA-binding region (zn(2)-C6 fungal-type). A compositionally biased stretch (polar residues) spans Thr-749–Thr-768. Residues Thr-749–Gly-779 form a disordered region.

It belongs to the OAF3 family.

It is found in the cytoplasm. The protein resides in the nucleus. Its subcellular location is the mitochondrion. Its function is as follows. Transcriptional inhibitor with a significantly increased number of target genes in response to oleate. In Vanderwaltozyma polyspora (strain ATCC 22028 / DSM 70294 / BCRC 21397 / CBS 2163 / NBRC 10782 / NRRL Y-8283 / UCD 57-17) (Kluyveromyces polysporus), this protein is Oleate activated transcription factor 3 (OAF3).